The following is a 303-amino-acid chain: UDP-3-O-acyl-N-acetylglucosamine deacetylase (303 aa).

3 residues coordinate Zn(2+): H78, H237, and D241. The active-site Proton donor is the H264.

Belongs to the LpxC family. It depends on Zn(2+) as a cofactor.

It catalyses the reaction a UDP-3-O-[(3R)-3-hydroxyacyl]-N-acetyl-alpha-D-glucosamine + H2O = a UDP-3-O-[(3R)-3-hydroxyacyl]-alpha-D-glucosamine + acetate. It functions in the pathway glycolipid biosynthesis; lipid IV(A) biosynthesis; lipid IV(A) from (3R)-3-hydroxytetradecanoyl-[acyl-carrier-protein] and UDP-N-acetyl-alpha-D-glucosamine: step 2/6. In terms of biological role, catalyzes the hydrolysis of UDP-3-O-myristoyl-N-acetylglucosamine to form UDP-3-O-myristoylglucosamine and acetate, the committed step in lipid A biosynthesis. The polypeptide is UDP-3-O-acyl-N-acetylglucosamine deacetylase (Pseudomonas entomophila (strain L48)).